Consider the following 227-residue polypeptide: Ribonuclease 3 (227 aa).

The RNase III domain maps to 3 to 130 (TNAISKIIKY…LIGAIYLDGG (128 aa)). Position 43 (E43) interacts with Mg(2+). D47 is an active-site residue. N116 and E119 together coordinate Mg(2+). The active site involves E119. Residues 155 to 224 (DAKTILQEWA…ASLMLAKINY (70 aa)) enclose the DRBM domain.

It belongs to the ribonuclease III family. Homodimer. Requires Mg(2+) as cofactor.

It is found in the cytoplasm. The catalysed reaction is Endonucleolytic cleavage to 5'-phosphomonoester.. Digests double-stranded RNA. Involved in the processing of primary rRNA transcript to yield the immediate precursors to the large and small rRNAs (23S and 16S). Processes some mRNAs, and tRNAs when they are encoded in the rRNA operon. Processes pre-crRNA and tracrRNA of type II CRISPR loci if present in the organism. This Ehrlichia ruminantium (strain Welgevonden) protein is Ribonuclease 3.